A 203-amino-acid chain; its full sequence is 3-isopropylmalate dehydratase small subunit (203 aa).

It belongs to the LeuD family. LeuD type 1 subfamily. As to quaternary structure, heterodimer of LeuC and LeuD.

The enzyme catalyses (2R,3S)-3-isopropylmalate = (2S)-2-isopropylmalate. It functions in the pathway amino-acid biosynthesis; L-leucine biosynthesis; L-leucine from 3-methyl-2-oxobutanoate: step 2/4. Catalyzes the isomerization between 2-isopropylmalate and 3-isopropylmalate, via the formation of 2-isopropylmaleate. The protein is 3-isopropylmalate dehydratase small subunit of Rhodospirillum centenum (strain ATCC 51521 / SW).